The chain runs to 729 residues: Dipeptidyl peptidase 3 (729 aa).

Position 459 (H459) interacts with Zn(2+). E460 is a catalytic residue. Zn(2+) contacts are provided by H464 and E517.

The protein belongs to the peptidase M49 family. Zn(2+) serves as cofactor.

It is found in the cytoplasm. It carries out the reaction Release of an N-terminal dipeptide from a peptide comprising four or more residues, with broad specificity. Also acts on dipeptidyl 2-naphthylamides.. The chain is Dipeptidyl peptidase 3 (dpp3) from Nematostella vectensis (Starlet sea anemone).